The following is a 202-amino-acid chain: Orotate phosphoribosyltransferase (202 aa).

113–121 (EDIITTGGS) lines the 5-phospho-alpha-D-ribose 1-diphosphate pocket. Orotate contacts are provided by Thr-117 and Arg-145.

This sequence belongs to the purine/pyrimidine phosphoribosyltransferase family. PyrE subfamily. In terms of assembly, homodimer. Mg(2+) serves as cofactor.

It carries out the reaction orotidine 5'-phosphate + diphosphate = orotate + 5-phospho-alpha-D-ribose 1-diphosphate. Its pathway is pyrimidine metabolism; UMP biosynthesis via de novo pathway; UMP from orotate: step 1/2. Catalyzes the transfer of a ribosyl phosphate group from 5-phosphoribose 1-diphosphate to orotate, leading to the formation of orotidine monophosphate (OMP). The protein is Orotate phosphoribosyltransferase of Nitratiruptor sp. (strain SB155-2).